The sequence spans 132 residues: Small ribosomal subunit protein uS8 (132 aa).

Belongs to the universal ribosomal protein uS8 family. As to quaternary structure, part of the 30S ribosomal subunit. Contacts proteins S5 and S12.

In terms of biological role, one of the primary rRNA binding proteins, it binds directly to 16S rRNA central domain where it helps coordinate assembly of the platform of the 30S subunit. The chain is Small ribosomal subunit protein uS8 from Xanthobacter autotrophicus (strain ATCC BAA-1158 / Py2).